An 898-amino-acid polypeptide reads, in one-letter code: Zinc finger protein 574 (898 aa).

C2H2-type zinc fingers lie at residues 16-38 (YVCS…QNSH), 76-98 (YQCL…QELH), and 126-148 (YECV…RQTH). Position 164 is a phosphoserine (serine 164). Residues 213 to 235 (YKCSECSQLFQMPADFLEHQATH) form a C2H2-type 4 zinc finger. Positions 243 to 305 (AEEPATQQET…PRRSSSGESG (63 aa)) are disordered. Residues 273–290 (HSYELRNELRNGEAMGRD) are compositionally biased toward basic and acidic residues. Serine 301 bears the Phosphoserine mark. 4 C2H2-type zinc fingers span residues 310-332 (LFCS…LRSH), 337-359 (FKCP…LGDH), 365-387 (FLCV…RRAH), and 393-414 (HSCP…RRTH). The interval 417–460 (GGVPLPTTPVPPEEPAISFPEPAPAETGELEAPELPVSEESSAE) is disordered. 6 consecutive C2H2-type zinc fingers follow at residues 467–490 (YRCL…RFVH), 496–518 (HKCS…LRTH), 524–546 (FPCP…RLTH), 552–574 (YRCG…RLVH), 580–602 (YRCQ…RYHH), and 608–631 (YKCR…LVVH). A C2H2-type 15; degenerate zinc finger spans residues 637 to 660 (HRCPSCGAAFPSSLRLREHRCAAA). A C2H2-type 16 zinc finger spans residues 668-690 (FECGTCGKKVGSAARLQAHEAAH). The disordered stretch occupies residues 691 to 735 (AAAGPGEVLAKEPPAPRAARATRTPVAPSPTALGGTTSAAPAAPA). The segment covering 707–734 (RAARATRTPVAPSPTALGGTTSAAPAAP) has biased composition (low complexity). Residue serine 719 is modified to Phosphoserine. Threonine 726 carries the post-translational modification Phosphothreonine. C2H2-type zinc fingers lie at residues 740–762 (LECS…RRIH), 768–790 (YPCP…RRLH), 796–818 (FACE…RRIH), and 824–846 (YSCP…RKTH). Residue arginine 834 is modified to Asymmetric dimethylarginine.

This sequence belongs to the krueppel C2H2-type zinc-finger protein family.

It is found in the nucleus. May be involved in transcriptional regulation. This is Zinc finger protein 574 (Znf574) from Rattus norvegicus (Rat).